The following is a 407-amino-acid chain: Myeloid cell nuclear differentiation antigen (407 aa).

The 88-residue stretch at 1-88 (MANEYKKILL…VNNLRKERSK (88 aa)) folds into the Pyrin domain. Positions 122–211 (LTSEVGERIP…TRRNVPQKDP (90 aa)) are disordered. Residues 131-137 (PVAQKRK) carry the Nuclear localization signal motif. A compositionally biased stretch (low complexity) spans 177-199 (HTSSSTPSNTSFAQNQQTQAQCQ). In terms of domain architecture, HIN-200 spans 196-394 (AQCQVDTRRN…CGSHSFIKVI (199 aa)).

As to quaternary structure, participates in a ternary complex with YY1 and the YY1 target DNA element. Binds nucleolin and nucleophosmin/NPM/B23.

Its subcellular location is the nucleus. The protein resides in the cytoplasm. In terms of biological role, may act as a transcriptional activator/repressor in the myeloid lineage. Plays a role in the granulocyte/monocyte cell-specific response to interferon. Stimulates the DNA binding of the transcriptional repressor protein YY1. The sequence is that of Myeloid cell nuclear differentiation antigen (MNDA) from Macaca fascicularis (Crab-eating macaque).